We begin with the raw amino-acid sequence, 179 residues long: Adenine phosphoribosyltransferase (179 aa).

This sequence belongs to the purine/pyrimidine phosphoribosyltransferase family. As to quaternary structure, homodimer.

Its subcellular location is the cytoplasm. The enzyme catalyses AMP + diphosphate = 5-phospho-alpha-D-ribose 1-diphosphate + adenine. The protein operates within purine metabolism; AMP biosynthesis via salvage pathway; AMP from adenine: step 1/1. Functionally, catalyzes a salvage reaction resulting in the formation of AMP, that is energically less costly than de novo synthesis. This chain is Adenine phosphoribosyltransferase, found in Nitrobacter winogradskyi (strain ATCC 25391 / DSM 10237 / CIP 104748 / NCIMB 11846 / Nb-255).